We begin with the raw amino-acid sequence, 181 residues long: Caltractin ICL1a (181 aa).

The segment at 1–29 (MARRGQQPPPQQAPPAQKNQPGKFNPAEF) is disordered. Positions 14–23 (PPAQKNQPGK) are enriched in low complexity. 4 consecutive EF-hand domains span residues 37–72 (EEVL…LGFE), 73–108 (AKNQ…RISE), 110–145 (DSKA…LGET), and 146–181 (MDDS…KTFA). Positions 50, 52, 54, 56, 61, 86, 88, 90, 92, and 97 each coordinate Ca(2+).

This sequence belongs to the centrin family. As to quaternary structure, monomer.

Its subcellular location is the cytoplasm. It is found in the cytoskeleton. Its function is as follows. Plays a fundamental role in microtubule organizing center structure and function. Component of the infraciliary lattice (ICL) and the ciliary basal bodies. This chain is Caltractin ICL1a (Icl1a), found in Paramecium tetraurelia.